We begin with the raw amino-acid sequence, 247 residues long: UDP-2,3-diacylglucosamine hydrolase (247 aa).

Positions 8, 10, 41, 79, and 115 each coordinate Mn(2+). 79-80 (NH) contributes to the substrate binding site. Aspartate 123, lysine 165, lysine 168, and histidine 196 together coordinate substrate. Mn(2+) contacts are provided by histidine 196 and histidine 198.

Belongs to the LpxH family. Requires Mn(2+) as cofactor.

It is found in the cell inner membrane. The catalysed reaction is UDP-2-N,3-O-bis[(3R)-3-hydroxytetradecanoyl]-alpha-D-glucosamine + H2O = 2-N,3-O-bis[(3R)-3-hydroxytetradecanoyl]-alpha-D-glucosaminyl 1-phosphate + UMP + 2 H(+). It functions in the pathway glycolipid biosynthesis; lipid IV(A) biosynthesis; lipid IV(A) from (3R)-3-hydroxytetradecanoyl-[acyl-carrier-protein] and UDP-N-acetyl-alpha-D-glucosamine: step 4/6. Its function is as follows. Hydrolyzes the pyrophosphate bond of UDP-2,3-diacylglucosamine to yield 2,3-diacylglucosamine 1-phosphate (lipid X) and UMP by catalyzing the attack of water at the alpha-P atom. Involved in the biosynthesis of lipid A, a phosphorylated glycolipid that anchors the lipopolysaccharide to the outer membrane of the cell. The sequence is that of UDP-2,3-diacylglucosamine hydrolase from Blochmanniella floridana.